The sequence spans 84 residues: Sulfur carrier protein TusA (84 aa).

Cys-19 functions as the Cysteine persulfide intermediate in the catalytic mechanism.

The protein belongs to the sulfur carrier protein TusA family. As to quaternary structure, interacts with IscS.

It localises to the cytoplasm. The protein operates within tRNA modification. Sulfur carrier protein involved in sulfur trafficking in the cell. Part of a sulfur-relay system required for 2-thiolation during synthesis of 2-thiouridine of the modified wobble base 5-methylaminomethyl-2-thiouridine (mnm(5)s(2)U) in tRNA. Interacts with IscS and stimulates its cysteine desulfurase activity. Accepts an activated sulfur from IscS, which is then transferred to TusD, and thus determines the direction of sulfur flow from IscS to 2-thiouridine formation. Also appears to be involved in sulfur transfer for the biosynthesis of molybdopterin. The polypeptide is Sulfur carrier protein TusA (Proteus mirabilis (strain HI4320)).